The primary structure comprises 328 residues: NADH-quinone oxidoreductase subunit H (328 aa).

8 helical membrane passes run 10–30, 80–100, 118–138, 155–175, 191–211, 243–263, 272–292, and 306–326; these read IIKIVVIVLIFSALAGIGTYF, IAPVITAATAFMAAAAIPFLP, IGILYILGIMGVGLYGPLLGG, AVFISYEVVTGLSILAPIMMV, ITSWIVWTQPVAFILFWIAAF, LFFIGEYANMFFISFVISLLF, LLGALGLLAKVAFFFFFFLWT, and WLCWKVLMPIALINIVITAIV.

Belongs to the complex I subunit 1 family. In terms of assembly, NDH-1 is composed of 14 different subunits. Subunits NuoA, H, J, K, L, M, N constitute the membrane sector of the complex.

It localises to the cell inner membrane. It carries out the reaction a quinone + NADH + 5 H(+)(in) = a quinol + NAD(+) + 4 H(+)(out). In terms of biological role, NDH-1 shuttles electrons from NADH, via FMN and iron-sulfur (Fe-S) centers, to quinones in the respiratory chain. The immediate electron acceptor for the enzyme in this species is believed to be ubiquinone. Couples the redox reaction to proton translocation (for every two electrons transferred, four hydrogen ions are translocated across the cytoplasmic membrane), and thus conserves the redox energy in a proton gradient. This subunit may bind ubiquinone. The chain is NADH-quinone oxidoreductase subunit H from Sulfurimonas denitrificans (strain ATCC 33889 / DSM 1251) (Thiomicrospira denitrificans (strain ATCC 33889 / DSM 1251)).